The primary structure comprises 806 residues: Lon protease 1 (806 aa).

One can recognise a Lon N-terminal domain in the interval 31-235 (VPLIAVPSHP…KVLELIYEEL (205 aa)). Residue 389-396 (GPPGVGKT) participates in ATP binding. A Lon proteolytic domain is found at 626–806 (AMYSGMVMGL…NMREVIKLLF (181 aa)). Active-site residues include S714 and K757.

It belongs to the peptidase S16 family. Homohexamer. Organized in a ring with a central cavity.

It localises to the cytoplasm. It carries out the reaction Hydrolysis of proteins in presence of ATP.. In terms of biological role, ATP-dependent serine protease that mediates the selective degradation of mutant and abnormal proteins as well as certain short-lived regulatory proteins. Required for cellular homeostasis and for survival from DNA damage and developmental changes induced by stress. Degrades polypeptides processively to yield small peptide fragments that are 5 to 10 amino acids long. Binds to DNA in a double-stranded, site-specific manner. This chain is Lon protease 1, found in Borreliella burgdorferi (strain ATCC 35210 / DSM 4680 / CIP 102532 / B31) (Borrelia burgdorferi).